The sequence spans 235 residues: Uridylate kinase (235 aa).

10–13 (KLSG) is a binding site for ATP. G52 is a UMP binding site. ATP contacts are provided by G53 and R57. UMP is bound by residues D72 and 133-140 (TSNPYFST). The ATP site is built by T160, Y166, and D169.

Belongs to the UMP kinase family. Homohexamer.

It localises to the cytoplasm. It catalyses the reaction UMP + ATP = UDP + ADP. It participates in pyrimidine metabolism; CTP biosynthesis via de novo pathway; UDP from UMP (UMPK route): step 1/1. With respect to regulation, inhibited by UTP. Catalyzes the reversible phosphorylation of UMP to UDP. The sequence is that of Uridylate kinase from Solibacter usitatus (strain Ellin6076).